Consider the following 113-residue polypeptide: Nitrogenase-stabilizing/protective protein NifW (113 aa).

This sequence belongs to the NifW family. In terms of assembly, homotrimer; associates with NifD.

May protect the nitrogenase Fe-Mo protein from oxidative damage. The polypeptide is Nitrogenase-stabilizing/protective protein NifW (Polaromonas naphthalenivorans (strain CJ2)).